A 263-amino-acid chain; its full sequence is Endonuclease 8 (263 aa).

Pro-2 serves as the catalytic Schiff-base intermediate with DNA. The active-site Proton donor is the Glu-3. Lys-53 acts as the Proton donor; for beta-elimination activity in catalysis. Positions 70, 125, and 169 each coordinate DNA. An FPG-type zinc finger spans residues 229-263 (KVFHRDGEACERCGGIIEKTTLSSRPFYWCPHCQK). The active-site Proton donor; for delta-elimination activity is the Arg-253.

This sequence belongs to the FPG family. Requires Zn(2+) as cofactor.

The catalysed reaction is 2'-deoxyribonucleotide-(2'-deoxyribose 5'-phosphate)-2'-deoxyribonucleotide-DNA = a 3'-end 2'-deoxyribonucleotide-(2,3-dehydro-2,3-deoxyribose 5'-phosphate)-DNA + a 5'-end 5'-phospho-2'-deoxyribonucleoside-DNA + H(+). In terms of biological role, involved in base excision repair of DNA damaged by oxidation or by mutagenic agents. Acts as a DNA glycosylase that recognizes and removes damaged bases. Has a preference for oxidized pyrimidines, such as thymine glycol, 5,6-dihydrouracil and 5,6-dihydrothymine. Has AP (apurinic/apyrimidinic) lyase activity and introduces nicks in the DNA strand. Cleaves the DNA backbone by beta-delta elimination to generate a single-strand break at the site of the removed base with both 3'- and 5'-phosphates. The protein is Endonuclease 8 of Salmonella arizonae (strain ATCC BAA-731 / CDC346-86 / RSK2980).